The primary structure comprises 319 residues: Mercury resistance probable Hg transport protein (319 aa).

Residues C298, C299, C318, and C319 each contribute to the Hg(2+) site.

The sequence is that of Mercury resistance probable Hg transport protein from Streptomyces lividans.